The chain runs to 173 residues: Crossover junction endodeoxyribonuclease RuvC (173 aa).

Catalysis depends on residues Asp-8, Glu-67, and Asp-139. Residues Asp-8, Glu-67, and Asp-139 each coordinate Mg(2+).

The protein belongs to the RuvC family. In terms of assembly, homodimer which binds Holliday junction (HJ) DNA. The HJ becomes 2-fold symmetrical on binding to RuvC with unstacked arms; it has a different conformation from HJ DNA in complex with RuvA. In the full resolvosome a probable DNA-RuvA(4)-RuvB(12)-RuvC(2) complex forms which resolves the HJ. Requires Mg(2+) as cofactor.

It is found in the cytoplasm. The enzyme catalyses Endonucleolytic cleavage at a junction such as a reciprocal single-stranded crossover between two homologous DNA duplexes (Holliday junction).. The RuvA-RuvB-RuvC complex processes Holliday junction (HJ) DNA during genetic recombination and DNA repair. Endonuclease that resolves HJ intermediates. Cleaves cruciform DNA by making single-stranded nicks across the HJ at symmetrical positions within the homologous arms, yielding a 5'-phosphate and a 3'-hydroxyl group; requires a central core of homology in the junction. The consensus cleavage sequence is 5'-(A/T)TT(C/G)-3'. Cleavage occurs on the 3'-side of the TT dinucleotide at the point of strand exchange. HJ branch migration catalyzed by RuvA-RuvB allows RuvC to scan DNA until it finds its consensus sequence, where it cleaves and resolves the cruciform DNA. The chain is Crossover junction endodeoxyribonuclease RuvC from Yersinia pseudotuberculosis serotype O:1b (strain IP 31758).